The following is a 146-amino-acid chain: D-aminoacyl-tRNA deacylase (146 aa).

A Gly-cisPro motif, important for rejection of L-amino acids motif is present at residues 137–138 (GP).

This sequence belongs to the DTD family. Homodimer.

Its subcellular location is the cytoplasm. The catalysed reaction is glycyl-tRNA(Ala) + H2O = tRNA(Ala) + glycine + H(+). It carries out the reaction a D-aminoacyl-tRNA + H2O = a tRNA + a D-alpha-amino acid + H(+). In terms of biological role, an aminoacyl-tRNA editing enzyme that deacylates mischarged D-aminoacyl-tRNAs. Also deacylates mischarged glycyl-tRNA(Ala), protecting cells against glycine mischarging by AlaRS. Acts via tRNA-based rather than protein-based catalysis; rejects L-amino acids rather than detecting D-amino acids in the active site. By recycling D-aminoacyl-tRNA to D-amino acids and free tRNA molecules, this enzyme counteracts the toxicity associated with the formation of D-aminoacyl-tRNA entities in vivo and helps enforce protein L-homochirality. This chain is D-aminoacyl-tRNA deacylase, found in Variovorax paradoxus (strain S110).